The sequence spans 527 residues: Protein SDS24 (527 aa).

Low complexity-rich tracts occupy residues 1–22 and 55–74; these read MASTSNTFPPSQSNSSNNLPTS and TPPTATAAAPGPGCAATPAP. A disordered region spans residues 1–75; that stretch reads MASTSNTFPP…PGCAATPAPL (75 aa). Residue S94 is modified to Phosphoserine. 4 CBS domains span residues 114-175, 198-256, 283-342, and 443-512; these read IEQN…KITV, LTPK…NARS, TSRQ…QYPL, and LNSH…GNKE. Residues 424-447 show a composition bias toward low complexity; it reads AQSSANGATPMSKSSSSTSLNSHS. 2 disordered regions span residues 424 to 478 and 508 to 527; these read AQSS…TNTP and TGNKEVDPQSARRQRGSIAM. Phosphoserine is present on residues S458 and S524.

It belongs to the SDS23 family.

The protein resides in the cytoplasm. It is found in the nucleus. In terms of biological role, involved in DNA replication and cell separation during budding. This chain is Protein SDS24 (SDS24), found in Saccharomyces cerevisiae (strain YJM789) (Baker's yeast).